Reading from the N-terminus, the 137-residue chain is Large ribosomal subunit protein uL16 (137 aa).

Belongs to the universal ribosomal protein uL16 family. Part of the 50S ribosomal subunit.

Binds 23S rRNA and is also seen to make contacts with the A and possibly P site tRNAs. This chain is Large ribosomal subunit protein uL16, found in Stenotrophomonas maltophilia (strain R551-3).